We begin with the raw amino-acid sequence, 316 residues long: Bifunctional riboflavin kinase/FMN adenylyltransferase (316 aa).

Belongs to the RibF family.

The enzyme catalyses riboflavin + ATP = FMN + ADP + H(+). The catalysed reaction is FMN + ATP + H(+) = FAD + diphosphate. It functions in the pathway cofactor biosynthesis; FAD biosynthesis; FAD from FMN: step 1/1. It participates in cofactor biosynthesis; FMN biosynthesis; FMN from riboflavin (ATP route): step 1/1. In terms of biological role, catalyzes the phosphorylation of riboflavin to FMN followed by the adenylation of FMN to FAD. In Bacillus subtilis (strain 168), this protein is Bifunctional riboflavin kinase/FMN adenylyltransferase (ribC).